Reading from the N-terminus, the 237-residue chain is Protein XpsM (237 aa).

The tract at residues 1-21 is disordered; that stretch reads MPAATWTASPSPPNWPVPMPR. Residues 10-21 are compositionally biased toward pro residues; the sequence is PSPPNWPVPMPR.

This chain is Protein XpsM (xpsM), found in Xanthomonas campestris pv. campestris (strain ATCC 33913 / DSM 3586 / NCPPB 528 / LMG 568 / P 25).